The primary structure comprises 104 residues: Large ribosomal subunit protein bL21 (104 aa).

This sequence belongs to the bacterial ribosomal protein bL21 family. Part of the 50S ribosomal subunit. Contacts protein L20.

In terms of biological role, this protein binds to 23S rRNA in the presence of protein L20. The sequence is that of Large ribosomal subunit protein bL21 from Streptococcus agalactiae serotype Ia (strain ATCC 27591 / A909 / CDC SS700).